Here is a 335-residue protein sequence, read N- to C-terminus: Nod factor export ATP-binding protein I (335 aa).

Residues 1 to 10 (MTQEVPRRLE) are compositionally biased toward basic and acidic residues. Positions 1-22 (MTQEVPRRLEPSPFEWKGDAGP) are disordered. One can recognise an ABC transporter domain in the interval 37-267 (IDLASVTKSY…KIGCQVIEIY (231 aa)). 69 to 76 (GPNGAGKS) contributes to the ATP binding site.

Belongs to the ABC transporter superfamily. Lipooligosaccharide exporter (TC 3.A.1.102) family. As to quaternary structure, the complex is composed of two ATP-binding proteins (NodI) and two transmembrane proteins (NodJ).

It localises to the cell inner membrane. Part of the ABC transporter complex NodIJ involved in the export of the nodulation factors (Nod factors), the bacterial signal molecules that induce symbiosis and subsequent nodulation induction. Nod factors are LCO (lipo-chitin oligosaccharide), a modified beta-1,4-linked N-acetylglucosamine oligosaccharide. This subunit is responsible for energy coupling to the transport system. The protein is Nod factor export ATP-binding protein I of Rhizobium meliloti (Ensifer meliloti).